Reading from the N-terminus, the 342-residue chain is Holliday junction branch migration complex subunit RuvB (342 aa).

Residues 1 to 184 (MEEDFNIRDH…FGINLHLEYY (184 aa)) are large ATPase domain (RuvB-L). Residues Leu-23, Arg-24, Gly-65, Lys-68, Thr-69, Thr-70, 131–133 (EDY), Arg-174, Tyr-184, and Arg-221 each bind ATP. Residue Thr-69 participates in Mg(2+) binding. The small ATPAse domain (RuvB-S) stretch occupies residues 185-255 (DDDILSNIIS…IANYALEALN (71 aa)). The head domain (RuvB-H) stretch occupies residues 258 to 342 (KYGLDEIDNK…YNSQKTLFND (85 aa)). Arg-313 and Arg-318 together coordinate DNA.

It belongs to the RuvB family. Homohexamer. Forms an RuvA(8)-RuvB(12)-Holliday junction (HJ) complex. HJ DNA is sandwiched between 2 RuvA tetramers; dsDNA enters through RuvA and exits via RuvB. An RuvB hexamer assembles on each DNA strand where it exits the tetramer. Each RuvB hexamer is contacted by two RuvA subunits (via domain III) on 2 adjacent RuvB subunits; this complex drives branch migration. In the full resolvosome a probable DNA-RuvA(4)-RuvB(12)-RuvC(2) complex forms which resolves the HJ.

The protein resides in the cytoplasm. It carries out the reaction ATP + H2O = ADP + phosphate + H(+). In terms of biological role, the RuvA-RuvB-RuvC complex processes Holliday junction (HJ) DNA during genetic recombination and DNA repair, while the RuvA-RuvB complex plays an important role in the rescue of blocked DNA replication forks via replication fork reversal (RFR). RuvA specifically binds to HJ cruciform DNA, conferring on it an open structure. The RuvB hexamer acts as an ATP-dependent pump, pulling dsDNA into and through the RuvAB complex. RuvB forms 2 homohexamers on either side of HJ DNA bound by 1 or 2 RuvA tetramers; 4 subunits per hexamer contact DNA at a time. Coordinated motions by a converter formed by DNA-disengaged RuvB subunits stimulates ATP hydrolysis and nucleotide exchange. Immobilization of the converter enables RuvB to convert the ATP-contained energy into a lever motion, pulling 2 nucleotides of DNA out of the RuvA tetramer per ATP hydrolyzed, thus driving DNA branch migration. The RuvB motors rotate together with the DNA substrate, which together with the progressing nucleotide cycle form the mechanistic basis for DNA recombination by continuous HJ branch migration. Branch migration allows RuvC to scan DNA until it finds its consensus sequence, where it cleaves and resolves cruciform DNA. The sequence is that of Holliday junction branch migration complex subunit RuvB from Bacteroides fragilis (strain ATCC 25285 / DSM 2151 / CCUG 4856 / JCM 11019 / LMG 10263 / NCTC 9343 / Onslow / VPI 2553 / EN-2).